Consider the following 297-residue polypeptide: Glycerol-3-phosphate dehydrogenase [NAD(P)+] (297 aa).

NADPH contacts are provided by Trp11, Arg33, and Lys79. Sn-glycerol 3-phosphate contacts are provided by Lys79, Gly107, and Ser109. Ala111 contributes to the NADPH binding site. Positions 161, 214, 224, 225, and 226 each coordinate sn-glycerol 3-phosphate. Residue Lys161 is the Proton acceptor of the active site. Position 225 (Arg225) interacts with NADPH. The NADPH site is built by Val249 and Glu251.

It belongs to the NAD-dependent glycerol-3-phosphate dehydrogenase family.

It localises to the cytoplasm. It carries out the reaction sn-glycerol 3-phosphate + NAD(+) = dihydroxyacetone phosphate + NADH + H(+). The enzyme catalyses sn-glycerol 3-phosphate + NADP(+) = dihydroxyacetone phosphate + NADPH + H(+). It functions in the pathway membrane lipid metabolism; glycerophospholipid metabolism. Catalyzes the reduction of the glycolytic intermediate dihydroxyacetone phosphate (DHAP) to sn-glycerol 3-phosphate (G3P), the key precursor for phospholipid synthesis. This is Glycerol-3-phosphate dehydrogenase [NAD(P)+] from Campylobacter jejuni subsp. jejuni serotype O:6 (strain 81116 / NCTC 11828).